A 161-amino-acid polypeptide reads, in one-letter code: Putative pre-16S rRNA nuclease (161 aa).

This sequence belongs to the YqgF nuclease family.

The protein resides in the cytoplasm. Functionally, could be a nuclease involved in processing of the 5'-end of pre-16S rRNA. This is Putative pre-16S rRNA nuclease from Bradyrhizobium sp. (strain ORS 278).